A 500-amino-acid chain; its full sequence is Putative antiporter subunit mnhD2 (500 aa).

Transmembrane regions (helical) follow at residues 2–22 (MSNL…ILVF), 32–52 (ILSI…LIYV), 78–98 (LSLL…AYGF), 108–128 (FHLP…FLTS), 130–150 (LFNL…LVTL), 161–181 (IVYV…IGML), 209–229 (ISLV…FMWL), 240–260 (LAAL…IRFF), 273–293 (TLLV…VIAY), 308–328 (IGFI…GAIF), 330–350 (LAND…LVYM), 368–388 (FFGV…PFSG), 403–423 (GNYI…YSLF), and 450–470 (GLLS…PVVL).

This sequence belongs to the CPA3 antiporters (TC 2.A.63) subunit D family. In terms of assembly, may form a heterooligomeric complex that consists of seven subunits: mnhA2, mnhB2, mnhC2, mnhD2, mnhE2, mnhF2 and mnhG2.

The protein localises to the cell membrane. In Staphylococcus epidermidis (strain ATCC 12228 / FDA PCI 1200), this protein is Putative antiporter subunit mnhD2 (mnhD2).